A 536-amino-acid chain; its full sequence is Membrane protein insertase YidC (536 aa).

5 helical membrane-spanning segments follow: residues Phe7–Ser27, Leu338–Phe358, Leu419–Val439, Leu453–Ile473, and Pro494–Val514.

It belongs to the OXA1/ALB3/YidC family. Type 1 subfamily. As to quaternary structure, interacts with the Sec translocase complex via SecD. Specifically interacts with transmembrane segments of nascent integral membrane proteins during membrane integration.

The protein localises to the cell membrane. Required for the insertion and/or proper folding and/or complex formation of integral membrane proteins into the membrane. Involved in integration of membrane proteins that insert both dependently and independently of the Sec translocase complex, as well as at least some lipoproteins. Aids folding of multispanning membrane proteins. In Buchnera aphidicola subsp. Schizaphis graminum (strain Sg), this protein is Membrane protein insertase YidC.